We begin with the raw amino-acid sequence, 283 residues long: Small aggregate formation protein (283 aa).

Its subcellular location is the cytoplasm. Knockout of the gene for this protein causes small aggregate formation. May regulate the secretion or processing of a secreted factor that regulates aggregate size. In Dictyostelium discoideum (Social amoeba), this protein is Small aggregate formation protein (smlA).